The primary structure comprises 356 residues: GDP-mannose 4,6 dehydratase (356 aa).

Residues 12–17 (GITGQD), 69–70 (DL), 91–95 (LGAQS), and Tyr-106 contribute to the NADP(+) site. Thr-138 is an active-site residue. Active-site nucleophile residues include Glu-140 and Tyr-162. Positions 166, 192, and 197 each coordinate NADP(+).

The protein belongs to the NAD(P)-dependent epimerase/dehydratase family. GDP-mannose 4,6-dehydratase subfamily. The cofactor is NADP(+).

It catalyses the reaction GDP-alpha-D-mannose = GDP-4-dehydro-alpha-D-rhamnose + H2O. It participates in nucleotide-sugar biosynthesis; GDP-L-fucose biosynthesis via de novo pathway; GDP-L-fucose from GDP-alpha-D-mannose: step 1/2. Participates in the synthesis of GDP-L-fucose, catalyzing the conversion of GDP-D-mannose to GDP-4-dehydro-6-deoxy-D-mannose (GDP-4-dehydro-alpha-D-rhamnose) which is further catalyzed by GDP-L-fucose synthase (ger). GDP-L-fucose is important for the synthesis of fucosylated N-glycans which are expressed on the cell surface. This Dictyostelium discoideum (Social amoeba) protein is GDP-mannose 4,6 dehydratase (gmd).